The primary structure comprises 873 residues: Bifunctional heparan sulfate N-deacetylase/N-sulfotransferase 3 (873 aa).

Residues 1–13 (MSFIMKLHRHFQR) are Cytoplasmic-facing. Residues 14–34 (TVILLATFCMVSIIISAYYLY) traverse the membrane as a helical; Signal-anchor for type II membrane protein segment. Residues 35–873 (SGYKQENELS…WLRQELQKVR (839 aa)) are Lumenal-facing. The tract at residues 36-589 (GYKQENELSE…KRHRDIWSKE (554 aa)) is heparan sulfate N-deacetylase 3. N-linked (GlcNAc...) asparagine glycans are attached at residues Asn146, Asn226, Asn342, and Asn392. The heparan sulfate N-sulfotransferase 3 stretch occupies residues 590 to 873 (KTCDRLPKFL…WLRQELQKVR (284 aa)). Lys605 (for sulfotransferase activity) is an active-site residue. Position 605–609 (605–609 (KTGTT)) interacts with 3'-phosphoadenylyl sulfate. Asn658 carries N-linked (GlcNAc...) asparagine glycosylation. Ser703 provides a ligand contact to 3'-phosphoadenylyl sulfate. Asn794 is a glycosylation site (N-linked (GlcNAc...) asparagine). A disulfide bridge connects residues Cys809 and Cys819. 824-828 (KGRKY) contacts 3'-phosphoadenylyl sulfate.

It belongs to the sulfotransferase 1 family. NDST subfamily. In terms of assembly, monomer. In terms of tissue distribution, expressed in brain, kidney, liver, fetal and adult lung, adult pancreas, placenta, fetal spleen and fetal thymus. Not detected in adult/ fetal heart and skeletal muscle.

It is found in the golgi apparatus membrane. It carries out the reaction alpha-D-glucosaminyl-[heparan sulfate](n) + 3'-phosphoadenylyl sulfate = N-sulfo-alpha-D-glucosaminyl-[heparan sulfate](n) + adenosine 3',5'-bisphosphate + 2 H(+). The protein operates within glycan metabolism; heparan sulfate biosynthesis. It functions in the pathway glycan metabolism; heparin biosynthesis. Functionally, essential bifunctional enzyme that catalyzes both the N-deacetylation and the N-sulfation of glucosamine (GlcNAc) of the glycosaminoglycan in heparan sulfate. Modifies the GlcNAc-GlcA disaccharide repeating sugar backbone to make N-sulfated heparosan, a prerequisite substrate for later modifications in heparin biosynthesis. Has high deacetylase activity but low sulfotransferase activity. The sequence is that of Bifunctional heparan sulfate N-deacetylase/N-sulfotransferase 3 from Homo sapiens (Human).